A 178-amino-acid chain; its full sequence is Large ribosomal subunit protein uL6c (178 aa).

The protein belongs to the universal ribosomal protein uL6 family. In terms of assembly, part of the 50S ribosomal subunit.

It is found in the plastid. It localises to the chloroplast. Functionally, binds 23S rRNA. This Phaeodactylum tricornutum (strain CCAP 1055/1) protein is Large ribosomal subunit protein uL6c (rpl6).